Here is a 185-residue protein sequence, read N- to C-terminus: MKFTIAFAGLLGVFLTPALADYSISVNDDGNSGGSGQQSVSVNNEHNVANVDNNNGWNSWNALWDYRTGFAVTRLFEKKSCIVHKMKKEAMPSLQALDALVKEKKLQGKGPGGPPPKSLRYSVNPNRVDNLDKFGKSIVAMCKGIPTYMAEEIQGANLISYSEKCISANILWILNISFCGGIAEN.

Residues M1–A20 form the signal peptide. A BRICHOS domain is found at N54–A150. Residues C81 and C142 are joined by a disulfide bond.

The protein belongs to the gastrokine family. Highly expressed specifically in surface cells of the antrum mucosa from where it is secreted.

It localises to the secreted. Its subcellular location is the cytoplasmic granule. The protein localises to the golgi apparatus. Functionally, has mitogenic activity and may be involved in maintaining the integrity of the gastric mucosal epithelium. This Sus scrofa (Pig) protein is Gastrokine-1 (GKN1).